The following is a 38-amino-acid chain: Large ribosomal subunit protein bL12 (38 aa).

Belongs to the bacterial ribosomal protein bL12 family. As to quaternary structure, homodimer. Part of the ribosomal stalk of the 50S ribosomal subunit. Forms a multimeric L10(L12)X complex, where L10 forms an elongated spine to which 2 to 4 L12 dimers bind in a sequential fashion. Binds GTP-bound translation factors.

Forms part of the ribosomal stalk which helps the ribosome interact with GTP-bound translation factors. Is thus essential for accurate translation. The protein is Large ribosomal subunit protein bL12 (rplL) of Salinivibrio costicola (Vibrio costicola).